A 393-amino-acid polypeptide reads, in one-letter code: Small RNA 2'-O-methyltransferase (393 aa).

S-adenosyl-L-methionine contacts are provided by Tyr36, Gly55, Asp78, Lys83, Val115, and Ile131. Residues Glu132, Glu135, His136, and His181 each coordinate Mg(2+). Positions His286–Ser307 are disordered. The segment covering Arg290–Gly305 has biased composition (basic and acidic residues).

Belongs to the methyltransferase superfamily. HEN1 family. The cofactor is Mg(2+).

It localises to the cytoplasm. The enzyme catalyses small RNA 3'-end nucleotide + S-adenosyl-L-methionine = small RNA 3'-end 2'-O-methylnucleotide + S-adenosyl-L-homocysteine + H(+). Functionally, methyltransferase that adds a 2'-O-methyl group at the 3'-end of piRNAs, a class of 24 to 30 nucleotide RNAs that are generated by a Dicer-independent mechanism and are primarily derived from transposons and other repeated sequence elements. This probably protects the 3'-end of piRNAs from uridylation activity and subsequent degradation. Stabilization of piRNAs is essential for gametogenesis. This chain is Small RNA 2'-O-methyltransferase (HENMT1), found in Homo sapiens (Human).